The primary structure comprises 117 residues: UPF0342 protein LBUL_1430 (117 aa).

It belongs to the UPF0342 family.

The polypeptide is UPF0342 protein LBUL_1430 (Lactobacillus delbrueckii subsp. bulgaricus (strain ATCC BAA-365 / Lb-18)).